The chain runs to 175 residues: uncharacterized protein (175 aa).

This is an uncharacterized protein from Treponema pallidum (strain Nichols).